A 1013-amino-acid polypeptide reads, in one-letter code: Zinc finger and BTB domain-containing protein 4 (1013 aa).

The 123-residue stretch at 30–152 (CDVTLIAGDT…IYSARLALPG (123 aa)) folds into the BTB domain. K40 is covalently cross-linked (Glycyl lysine isopeptide (Lys-Gly) (interchain with G-Cter in SUMO2)). The segment covering 67–110 (LPPATGGAAPNPATTTAASSSSSSSSSSSSSSSSASSSSSSSSS) has biased composition (low complexity). Disordered stretches follow at residues 67–124 (LPPA…SPPR) and 183–221 (DAWV…AEAQ). A compositionally biased stretch (pro residues) spans 111-121 (SPPPASPPASS). Residues 186–348 (VPPTPAPMAT…CRYCEKVFAL (163 aa)) form an interaction with CBFA2T3 region. The C2H2-type 1; atypical zinc finger occupies 234–256 (LPCPQCGKSFIHPKRLQTHEAQC). Positions 257–281 (RRGASTRGSTGLGAGGAGPGGPAGV) are disordered. Residues 266–279 (TGLGAGGAGPGGPA) are compositionally biased toward gly residues. 3 consecutive C2H2-type zinc fingers follow at residues 309–331 (YVCA…SNVH), 337–359 (YPCR…EVWH), and 365–388 (YQCI…RAFH). Residue S391 is modified to Phosphoserine. Disordered regions lie at residues 428–765 (KTYS…STRF), 783–852 (HGQR…DPII), 883–904 (GREP…AGEG), and 972–1013 (VNPQ…GDVG). A compositionally biased stretch (pro residues) spans 453–470 (ASPPPGPPPAPEPGPPPS). 2 stretches are compositionally biased toward low complexity: residues 496 to 506 (TASTGGSQAAS) and 531 to 554 (ATPT…ATTT). K573 is covalently cross-linked (Glycyl lysine isopeptide (Lys-Gly) (interchain with G-Cter in SUMO2)). Residues 576 to 590 (GGIGGGGGPPTGAGR) show a composition bias toward gly residues. Positions 608–625 (IGEEAIVKRRISETDLRP) are enriched in basic and acidic residues. Residue K615 forms a Glycyl lysine isopeptide (Lys-Gly) (interchain with G-Cter in SUMO2) linkage. Positions 627-663 (ELSGEEMEESEEDEEEEDEEEEEEDEEESKAGGEDQL) form a coiled coil. Acidic residues predominate over residues 629 to 654 (SGEEMEESEEDEEEEDEEEEEEDEEE). A compositionally biased stretch (gly residues) spans 678–689 (AAGGASVGGSGL). 2 consecutive C2H2-type zinc fingers follow at residues 726 to 748 (HRCG…QEAH) and 765 to 787 (FTCP…GQRH). Phosphothreonine; by HIPK2 occurs at positions 795 and 797. Residues 836 to 846 (TAAEEASETAS) show a composition bias toward low complexity. Residues 883 to 902 (GREPGGGRGKSGSEGPVGAG) show a composition bias toward gly residues. A compositionally biased stretch (pro residues) spans 976–995 (AAPPAPPTPPPPTLPPPIPP). At T983 the chain carries Phosphothreonine; by HIPK2. Over residues 997 to 1013 (GEGERAGVERTQKGDVG) the composition is skewed to basic and acidic residues.

As to quaternary structure, interacts with HIPK2. Interacts with CBFA2T3. Interacts with ZBTB38. In terms of processing, phosphorylated by HIPK2. This phosphorylation reduces stability and triggers ZBTB4 protein degradation in response to DNA damage.

The protein localises to the nucleus. It localises to the chromosome. In terms of biological role, transcriptional repressor with bimodal DNA-binding specificity. Represses transcription in a methyl-CpG-dependent manner. Binds with a higher affinity to methylated CpG dinucleotides in the consensus sequence 5'-CGCG-3' but can also bind to the non-methylated consensus sequence 5'-CTGCNA-3' also known as the consensus kaiso binding site (KBS). Can also bind specifically to a single methyl-CpG pair and can bind hemimethylated DNA but with a lower affinity compared to methylated DNA. Plays a role in postnatal myogenesis, may be involved in the regulation of satellite cells self-renewal. This is Zinc finger and BTB domain-containing protein 4 (ZBTB4) from Homo sapiens (Human).